We begin with the raw amino-acid sequence, 285 residues long: Acetylglutamate kinase (285 aa).

Substrate-binding positions include 69 to 70, Arg91, and Asn183; that span reads GG.

Belongs to the acetylglutamate kinase family. ArgB subfamily.

The protein resides in the cytoplasm. It carries out the reaction N-acetyl-L-glutamate + ATP = N-acetyl-L-glutamyl 5-phosphate + ADP. Its pathway is amino-acid biosynthesis; L-arginine biosynthesis; N(2)-acetyl-L-ornithine from L-glutamate: step 2/4. In terms of biological role, catalyzes the ATP-dependent phosphorylation of N-acetyl-L-glutamate. The protein is Acetylglutamate kinase of Jannaschia sp. (strain CCS1).